The following is a 398-amino-acid chain: Glucose-1-phosphate adenylyltransferase (398 aa).

Alpha-D-glucose 1-phosphate contacts are provided by residues Y100, G165, 180-181, and S191; that span reads EK.

This sequence belongs to the bacterial/plant glucose-1-phosphate adenylyltransferase family. In terms of assembly, homotetramer.

It catalyses the reaction alpha-D-glucose 1-phosphate + ATP + H(+) = ADP-alpha-D-glucose + diphosphate. The protein operates within glycan biosynthesis; glycogen biosynthesis. Involved in the biosynthesis of ADP-glucose, a building block required for the elongation reactions to produce glycogen. Catalyzes the reaction between ATP and alpha-D-glucose 1-phosphate (G1P) to produce pyrophosphate and ADP-Glc. This is Glucose-1-phosphate adenylyltransferase from Desulfitobacterium hafniense (strain Y51).